The primary structure comprises 332 residues: MSKKPIIGITMGDAAGVGPEIIIKSLRNRELYEQAHPIVIGDTKMLERAAKILDVDVSFDKKTKDEELMDTEFGKITCIDLDILPEDLAYGEVSPVSGNAAFEYLRMAIELANEGKIQAICTAPLNKEALQKGGHMYPGHTEILAELTNTEEFSMMLSSPKLKVIHVTTHVGLIQAIQMIKPERVHKVIQLAHETLSNSGIKNPKIGVCGINPHAGENGLFGNGEEEEKIIPAIQQAVKEGINVEGPLPADTLFFRAQRGDFDIVVAMYHDQGHGPIKVLGLEAGVNITVGLPIIRTSVDHGTAFDIAGKGIVDERSMLEALHQAIELAPTK.

Residues His140 and Thr141 each contribute to the substrate site. Residues His170, His214, and His270 each contribute to the a divalent metal cation site. Substrate-binding residues include Lys278, Asn287, and Arg296.

It belongs to the PdxA family. PdxA2 subfamily. Homodimer. A divalent metal cation is required as a cofactor.

The enzyme catalyses 4-O-phospho-D-threonate + NAD(+) = dihydroxyacetone phosphate + CO2 + NADH. In terms of biological role, catalyzes the NAD-dependent oxidation and subsequent decarboxylation of D-threonate 4-phosphate to produce dihydroxyacetone phosphate (DHAP). This Oceanobacillus iheyensis (strain DSM 14371 / CIP 107618 / JCM 11309 / KCTC 3954 / HTE831) protein is Putative D-threonate 4-phosphate dehydrogenase.